We begin with the raw amino-acid sequence, 43 residues long: Potassium channel toxin gamma-KTx 4.9 (43 aa).

4 disulfide bridges follow: C5–C23, C11–C34, C20–C39, and C24–C41.

This sequence belongs to the ergtoxin family. Gamma-KTx 4 subfamily. Expressed by the venom gland.

It is found in the secreted. Reversibly blocks Kv11/ERG potassium channels. This chain is Potassium channel toxin gamma-KTx 4.9, found in Centruroides sculpturatus (Arizona bark scorpion).